The sequence spans 141 residues: Large ribosomal subunit protein uL11 (141 aa).

Belongs to the universal ribosomal protein uL11 family. As to quaternary structure, part of the ribosomal stalk of the 50S ribosomal subunit. Interacts with L10 and the large rRNA to form the base of the stalk. L10 forms an elongated spine to which L12 dimers bind in a sequential fashion forming a multimeric L10(L12)X complex. In terms of processing, one or more lysine residues are methylated.

Functionally, forms part of the ribosomal stalk which helps the ribosome interact with GTP-bound translation factors. In Clostridium tetani (strain Massachusetts / E88), this protein is Large ribosomal subunit protein uL11.